The chain runs to 274 residues: Large ribosomal subunit protein uL2 (274 aa).

2 disordered regions span residues 28–53 and 221–274; these read KPYA…TTRH and RGTA…RTKK. Positions 39–48 are enriched in low complexity; sequence KSGGRNNNGR. A compositionally biased stretch (basic residues) spans 253–274; the sequence is KGKKTRKNKRTEHFIVHRRTKK.

This sequence belongs to the universal ribosomal protein uL2 family. In terms of assembly, part of the 50S ribosomal subunit. Forms a bridge to the 30S subunit in the 70S ribosome.

Functionally, one of the primary rRNA binding proteins. Required for association of the 30S and 50S subunits to form the 70S ribosome, for tRNA binding and peptide bond formation. It has been suggested to have peptidyltransferase activity; this is somewhat controversial. Makes several contacts with the 16S rRNA in the 70S ribosome. In Proteus mirabilis (strain HI4320), this protein is Large ribosomal subunit protein uL2.